Reading from the N-terminus, the 1068-residue chain is Integrator complex subunit 3 homolog (1068 aa).

Disordered regions lie at residues 916–939 (YPSSSPNKRKRPPKGISVSTSTPS) and 1001–1068 (VGRR…NDSD). Residues S1038, S1039, S1043, and S1044 each carry the phosphoserine modification.

This sequence belongs to the Integrator subunit 3 family. In terms of assembly, belongs to the multiprotein complex Integrator, at least composed of IntS1, IntS2, IntS3, IntS4, omd/IntS5, IntS6, defl/IntS7, IntS8, IntS9, IntS10, IntS11, IntS12, asun/IntS13, IntS14 and IntS15. The core complex associates with protein phosphatase 2A subunits mts/PP2A and Pp2A-29B, to form the Integrator-PP2A (INTAC) complex.

It is found in the nucleus. It localises to the cytoplasm. Functionally, component of the integrator complex, a multiprotein complex that terminates RNA polymerase II (Pol II) transcription in the promoter-proximal region of genes. The integrator complex provides a quality checkpoint during transcription elongation by driving premature transcription termination of transcripts that are unfavorably configured for transcriptional elongation: the complex terminates transcription by (1) catalyzing dephosphorylation of the C-terminal domain (CTD) of Pol II subunit Polr2A/Rbp1 and Spt5, and (2) degrading the exiting nascent RNA transcript via endonuclease activity. The integrator complex is also involved in the 3'-end processing of the U7 snRNA, and also the spliceosomal snRNAs U1, U2, U4 and U5. In Drosophila sechellia (Fruit fly), this protein is Integrator complex subunit 3 homolog (IntS3).